The following is an 82-amino-acid chain: Cytochrome b559 subunit alpha (82 aa).

A helical membrane pass occupies residues 22-36 (VIHAVTLPSIFLAGF). His24 lines the heme pocket.

Belongs to the PsbE/PsbF family. In terms of assembly, heterodimer of an alpha subunit and a beta subunit. PSII is composed of 1 copy each of membrane proteins PsbA, PsbB, PsbC, PsbD, PsbE, PsbF, PsbH, PsbI, PsbJ, PsbK, PsbL, PsbM, PsbT, PsbX, PsbY, PsbZ, Psb30/Ycf12, peripheral proteins PsbO, CyanoQ (PsbQ), PsbU, PsbV and a large number of cofactors. It forms dimeric complexes. Heme b serves as cofactor.

The protein resides in the cellular thylakoid membrane. This b-type cytochrome is tightly associated with the reaction center of photosystem II (PSII). PSII is a light-driven water:plastoquinone oxidoreductase that uses light energy to abstract electrons from H(2)O, generating O(2) and a proton gradient subsequently used for ATP formation. It consists of a core antenna complex that captures photons, and an electron transfer chain that converts photonic excitation into a charge separation. This Synechococcus sp. (strain CC9605) protein is Cytochrome b559 subunit alpha.